The primary structure comprises 500 residues: Hepatic triacylglycerol lipase (500 aa).

A signal peptide spans 1-21 (MENPLCVSIFLFYCILIQSSA). A disordered region spans residues 23 to 44 (GQSLGPESFGRRSRAAETNKTP). Residues Asn67 and Asn78 are each glycosylated (N-linked (GlcNAc...) asparagine). Catalysis depends on Ser168, which acts as the Nucleophile. Asp194 (charge relay system) is an active-site residue. The tract at residues 254–277 (CHFLELYKHFAKHGLNAITRTVKC) is essential for determining substrate specificity. Catalysis depends on His279, which acts as the Charge relay system. In terms of domain architecture, PLAT spans 353–487 (YHYQFKIRFI…HPAREKTFVR (135 aa)). Residues Asn363 and Asn398 are each glycosylated (N-linked (GlcNAc...) asparagine).

Belongs to the AB hydrolase superfamily. Lipase family. As to quaternary structure, homodimer.

It is found in the secreted. It catalyses the reaction a triacylglycerol + H2O = a diacylglycerol + a fatty acid + H(+). It carries out the reaction a 1-acyl-sn-glycero-3-phosphocholine + H2O = sn-glycerol 3-phosphocholine + a fatty acid + H(+). The catalysed reaction is a 1,2-diacyl-sn-glycero-3-phosphocholine + H2O = a 2-acyl-sn-glycero-3-phosphocholine + a fatty acid + H(+). The enzyme catalyses 1,2,3-tri-(9Z-octadecenoyl)-glycerol + H2O = di-(9Z)-octadecenoylglycerol + (9Z)-octadecenoate + H(+). It catalyses the reaction 1,2-di-(9Z-octadecenoyl)-sn-glycero-3-phosphocholine + H2O = (9Z-octadecenoyl)-sn-glycero-3-phosphocholine + (9Z)-octadecenoate + H(+). It carries out the reaction 1,2,3-tributanoylglycerol + H2O = dibutanoylglycerol + butanoate + H(+). The catalysed reaction is 1,2-dihexadecanoyl-sn-glycero-3-phosphocholine + H2O = hexadecanoyl-sn-glycero-3-phosphocholine + hexadecanoate + H(+). The enzyme catalyses 1,2-di-(9Z-octadecenoyl)-sn-glycerol + H2O = 2-(9Z-octadecenoyl)-glycerol + (9Z)-octadecenoate + H(+). It catalyses the reaction 1,2,3-tri-(9Z-octadecenoyl)-glycerol + H2O = 2,3-di-(9Z)-octadecenoyl-sn-glycerol + (9Z)-octadecenoate + H(+). It carries out the reaction 1-(9Z-octadecenoyl)-sn-glycero-3-phospho-L-serine + H2O = sn-glycero-3-phospho-L-serine + (9Z)-octadecenoate + H(+). The catalysed reaction is 1-hexadecanoyl-sn-glycero-3-phosphocholine + H2O = sn-glycerol 3-phosphocholine + hexadecanoate + H(+). The enzyme catalyses 1,3-di-(9Z-octadecenoyl)-glycerol + H2O = 3-(9Z-octadecenoyl)-sn-glycerol + (9Z)-octadecenoate + H(+). Catalyzes the hydrolysis of triglycerides and phospholipids present in circulating plasma lipoproteins, including chylomicrons, intermediate density lipoproteins (IDL), low density lipoproteins (LDL) of large size and high density lipoproteins (HDL), releasing free fatty acids (FFA) and smaller lipoprotein particles. Also exhibits lysophospholipase activity. Can hydrolyze both neutral lipid and phospholipid substrates but shows a greater binding affinity for neutral lipid substrates than phospholipid substrates. In native LDL, preferentially hydrolyzes the phosphatidylcholine species containing polyunsaturated fatty acids at sn-2 position. The polypeptide is Hepatic triacylglycerol lipase (LIPC) (Bos taurus (Bovine)).